Consider the following 843-residue polypeptide: MSSIARPPDPCLVAIILIVRSRAGPRLVFHYPPNPLSENGLRPARKERRTSRSKNGQDYKSNESSSSEESGSSSDDDEDEHQRQLQSQSQSQSHLSGSVVSGRRSSNFGLDDHVAMSVSPGGDSQRAGSMGSGSGRTSFRKRGGNSDVEEDSGAASDRQEDGSGGAGGPYRPPWESLLGLPADVWEKLLSPSPAWHKRRFEVGINDLAFIGWPVFVREDGTWRKQRRKKKKKRRADWEGGELGHNENAEDAPDDEDGDAGGNASGGGGLMAASTETLSPKQVTLSEAKRGSGSSGKAARSLVDCLDGDDKDSMTMFNVVFVLDPPLLEYSMRTKEVYDNIIKKFAKALKWEQARTDYVWREAQHISHLKEKAKERRTSLNTLYTELITQSSLARAIYTVHTSISASKIASVPLSPDVSISLQIPPLTSTPYLPGPTDKAYPGLWLTTADSVTPVEDPTADEYTAPHQVLAKHFALLLLDNEAAILRDVEASGGALAPALAHYLRCSKPTKSFAQISASSGIPLSTIQMLASHLVYWRRARAIPPIHQRDTYIVSPNCDLSKLEVATAAYQAAFPTLPSLPKMLSALSGTPRPYGSFIPSKDHKETYFAILAWLLRGGWVTQLRSFARVKVTPEIKMAVEVALRREEVDKYLRKGRSLEAQKSTDGENGNEEDENDDASSSSSSSLASQGSGEETPMPGRYQQESNPRLSHSMLDRNTSLRTSSLILFPHRASPLESRWLEQIVSRFPEHPRSAGRHRRGEGSNAGGGEIDPEYAALSTPMKDLWPTYIKYFNGLDALEKIPVREGLKRKFVWQVLTRLGLVTSQQSSIELDPREQVLVSVRHW.

Residues Met-1–Ala-23 form the signal peptide. Disordered regions lie at residues His-30 to Trp-174, Trp-222 to Ala-272, Leu-657 to Pro-706, and His-749 to Glu-768. The segment covering Pro-43–Arg-52 has biased composition (basic residues). 2 stretches are compositionally biased toward low complexity: residues Asn-62–Ser-73 and Gln-84–Ser-106. The segment covering Arg-223–Arg-234 has biased composition (basic residues). Residues Ala-235–Asn-247 are compositionally biased toward basic and acidic residues. Positions Ala-248–Asp-258 are enriched in acidic residues. The segment covering Ala-259 to Leu-269 has biased composition (gly residues). A compositionally biased stretch (acidic residues) spans Asn-667–Asp-676. Low complexity predominate over residues Ala-677–Glu-693.

This sequence belongs to the NPR3 family.

Its function is as follows. Mediates inactivation of the TORC1 complex in response to amino acid starvation. Required for meiotic nuclear division. The sequence is that of Nitrogen permease regulator 3 (npr3) from Aspergillus fumigatus (strain ATCC MYA-4609 / CBS 101355 / FGSC A1100 / Af293) (Neosartorya fumigata).